We begin with the raw amino-acid sequence, 414 residues long: Protein MAK11 (414 aa).

N-acetylserine is present on S2. 6 WD repeats span residues 50–78 (AHSL…RIYD), 90–135 (SHQG…MVWR), 147–177 (GHTA…RLWN), 189–221 (LRKY…LIYE), 238–267 (LMHI…HFYP), and 298–330 (GHTN…VVWD). S376 and S380 each carry phosphoserine. T382 carries the phosphothreonine modification.

Associates with 60S pre-ribosomal particles.

The protein resides in the nucleus. The protein localises to the nucleolus. Its subcellular location is the nucleus membrane. Its function is as follows. Essential for cell growth. Plays a role in assembly of 60S pre-ribosomal particles in the nucleolus. Also required for replication of the M1 double-stranded RNA of the L-A virus. This latter function may reflect an enhanced requirement for free 60S ribosomal particles for the translation of viral mRNAs which lack poly-A tails. The chain is Protein MAK11 (MAK11) from Saccharomyces cerevisiae (strain ATCC 204508 / S288c) (Baker's yeast).